Reading from the N-terminus, the 465-residue chain is Siroheme synthase (465 aa).

The tract at residues 1–203 is precorrin-2 dehydrogenase /sirohydrochlorin ferrochelatase; sequence MEYLPLFHNL…GRTAEAERLL (203 aa). NAD(+)-binding positions include 22–23 and 43–44; these read EI and PS. Position 128 is a phosphoserine (Ser-128). Positions 216-465 are uroporphyrinogen-III C-methyltransferase; it reads GEVYLVGAGP…WFEGAQAAGR (250 aa). Pro-225 contacts S-adenosyl-L-methionine. Catalysis depends on Asp-248, which acts as the Proton acceptor. Catalysis depends on Lys-270, which acts as the Proton donor. Residues 301–303, Ile-306, 331–332, Met-383, and Gly-412 each bind S-adenosyl-L-methionine; these read GGD and TA.

In the N-terminal section; belongs to the precorrin-2 dehydrogenase / sirohydrochlorin ferrochelatase family. This sequence in the C-terminal section; belongs to the precorrin methyltransferase family.

The catalysed reaction is uroporphyrinogen III + 2 S-adenosyl-L-methionine = precorrin-2 + 2 S-adenosyl-L-homocysteine + H(+). It carries out the reaction precorrin-2 + NAD(+) = sirohydrochlorin + NADH + 2 H(+). It catalyses the reaction siroheme + 2 H(+) = sirohydrochlorin + Fe(2+). It participates in cofactor biosynthesis; adenosylcobalamin biosynthesis; precorrin-2 from uroporphyrinogen III: step 1/1. The protein operates within cofactor biosynthesis; adenosylcobalamin biosynthesis; sirohydrochlorin from precorrin-2: step 1/1. Its pathway is porphyrin-containing compound metabolism; siroheme biosynthesis; precorrin-2 from uroporphyrinogen III: step 1/1. It functions in the pathway porphyrin-containing compound metabolism; siroheme biosynthesis; siroheme from sirohydrochlorin: step 1/1. It participates in porphyrin-containing compound metabolism; siroheme biosynthesis; sirohydrochlorin from precorrin-2: step 1/1. Multifunctional enzyme that catalyzes the SAM-dependent methylations of uroporphyrinogen III at position C-2 and C-7 to form precorrin-2 via precorrin-1. Then it catalyzes the NAD-dependent ring dehydrogenation of precorrin-2 to yield sirohydrochlorin. Finally, it catalyzes the ferrochelation of sirohydrochlorin to yield siroheme. In Stutzerimonas stutzeri (strain A1501) (Pseudomonas stutzeri), this protein is Siroheme synthase.